A 421-amino-acid polypeptide reads, in one-letter code: Methionine aminopeptidase 2 (421 aa).

Positions 1 to 53 (MTDAEIENSPASDLKELNLENEGVEQQDQAKADESDPVESKKKKNKKKKKKKS) are disordered. Over residues 28 to 40 (DQAKADESDPVES) the composition is skewed to basic and acidic residues. Phosphoserine is present on serine 35. Positions 41–53 (KKKKNKKKKKKKS) are enriched in basic residues. A substrate-binding site is contributed by histidine 174. Residues aspartate 194, aspartate 205, and histidine 274 each coordinate a divalent metal cation. Histidine 282 is a substrate binding site. Residues glutamate 307 and glutamate 402 each coordinate a divalent metal cation.

The protein belongs to the peptidase M24A family. Methionine aminopeptidase eukaryotic type 2 subfamily. Co(2+) is required as a cofactor. Requires Zn(2+) as cofactor. Mn(2+) serves as cofactor. The cofactor is Fe(2+).

It localises to the cytoplasm. It catalyses the reaction Release of N-terminal amino acids, preferentially methionine, from peptides and arylamides.. Cotranslationally removes the N-terminal methionine from nascent proteins. The N-terminal methionine is often cleaved when the second residue in the primary sequence is small and uncharged (Met-Ala-, Cys, Gly, Pro, Ser, Thr, or Val). This is Methionine aminopeptidase 2 from Saccharomyces cerevisiae (strain RM11-1a) (Baker's yeast).